We begin with the raw amino-acid sequence, 569 residues long: Glutamate--tRNA ligase (569 aa).

The 'HIGH' region motif lies at 108–118; it reads PNPDFVLHLGS.

This sequence belongs to the class-I aminoacyl-tRNA synthetase family. Glutamate--tRNA ligase type 2 subfamily.

It is found in the cytoplasm. The catalysed reaction is tRNA(Glu) + L-glutamate + ATP = L-glutamyl-tRNA(Glu) + AMP + diphosphate. Catalyzes the attachment of glutamate to tRNA(Glu) in a two-step reaction: glutamate is first activated by ATP to form Glu-AMP and then transferred to the acceptor end of tRNA(Glu). The polypeptide is Glutamate--tRNA ligase (Thermofilum pendens (strain DSM 2475 / Hrk 5)).